We begin with the raw amino-acid sequence, 211 residues long: Endonuclease YncB (211 aa).

The N-terminal stretch at 1 to 19 is a signal peptide; it reads MKKILISMIAIVLSITLAA. Cys-20 is lipidated: N-palmitoyl cysteine. Cys-20 carries S-diacylglycerol cysteine lipidation. The disordered stretch occupies residues 24–63; sequence HAAKNHSDSNGTEQVSQDTHSNEYNQTEQKAGTPHSKNQK. Positions 31–53 are enriched in polar residues; the sequence is DSNGTEQVSQDTHSNEYNQTEQK. Residues 64-197 form the TNase-like domain; the sequence is KLVNVTLDRA…KSDKLSIWSK (134 aa). A Ca(2+)-binding site is contributed by Asp-77. Residue Arg-91 is part of the active site. Residues Asp-96 and Thr-97 each coordinate Ca(2+). Active-site residues include Glu-99 and Arg-142.

It belongs to the thermonuclease family. Ca(2+) serves as cofactor.

It is found in the cell membrane. Inhibited by aurintricalboxylic acid but not by Zn(2+). Functionally, shows DNase activity on double strand DNA. The chain is Endonuclease YncB (yncB) from Bacillus subtilis (strain 168).